The primary structure comprises 101 residues: Small ribosomal subunit protein uS14 (101 aa).

Belongs to the universal ribosomal protein uS14 family. Part of the 30S ribosomal subunit. Contacts proteins S3 and S10.

Functionally, binds 16S rRNA, required for the assembly of 30S particles and may also be responsible for determining the conformation of the 16S rRNA at the A site. In Corynebacterium efficiens (strain DSM 44549 / YS-314 / AJ 12310 / JCM 11189 / NBRC 100395), this protein is Small ribosomal subunit protein uS14.